Consider the following 461-residue polypeptide: Probable tubulin polyglutamylase TTLL9 (461 aa).

Residues 1 to 21 (MSRPKNQNYKGHGLQKGKERE) are disordered. Positions 22–402 (QRASIRFKTT…EARLTGREKR (381 aa)) constitute a TTL domain. Residues Lys149 and 155–156 (QG) contribute to the ATP site. Gln155 contacts a protein. Residues 182–208 (SLEAQPARNTVNPSGSHDTRSSDDQKD) form a disordered region. Residues 188 to 197 (ARNTVNPSGS) show a composition bias toward polar residues. Positions 198–208 (HDTRSSDDQKD) are enriched in basic and acidic residues. ATP-binding positions include 218-221 (QRYI) and 231-233 (KFD). Arg257 provides a ligand contact to L-glutamate. Residue 276-277 (TN) coordinates ATP. Position 294 (Lys294) interacts with L-glutamate. Asp348, Glu361, and Asn363 together coordinate Mg(2+). L-glutamate is bound at residue Lys379.

Belongs to the tubulin--tyrosine ligase family. Requires Mg(2+) as cofactor.

It is found in the cytoplasm. It localises to the cytoskeleton. The protein resides in the cilium basal body. The protein localises to the flagellum axoneme. The catalysed reaction is (L-glutamyl)(n)-gamma-L-glutamyl-L-glutamyl-[protein] + L-glutamate + ATP = (L-glutamyl)(n+1)-gamma-L-glutamyl-L-glutamyl-[protein] + ADP + phosphate + H(+). In terms of biological role, probable tubulin polyglutamylase that generates side chains of glutamate on the gamma-carboxyl group of specific glutamate residues within the C-terminal tail of target proteins. Similar to TTLL1, may acquire enzymatic activity only in complex with other proteins as it is most likely lacking domains important for autonomous activity. Mediates tubulin polyglutamylation which induces establishment of microtubule heterogeneity in sperm flagella, thereby playing a role in normal motile flagella axoneme structure and sperm flagella beating pattern. This is Probable tubulin polyglutamylase TTLL9 (TTLL9) from Bos taurus (Bovine).